We begin with the raw amino-acid sequence, 345 residues long: Phosphoribosylformylglycinamidine cyclo-ligase (345 aa).

This sequence belongs to the AIR synthase family.

The protein resides in the cytoplasm. It catalyses the reaction 2-formamido-N(1)-(5-O-phospho-beta-D-ribosyl)acetamidine + ATP = 5-amino-1-(5-phospho-beta-D-ribosyl)imidazole + ADP + phosphate + H(+). Its pathway is purine metabolism; IMP biosynthesis via de novo pathway; 5-amino-1-(5-phospho-D-ribosyl)imidazole from N(2)-formyl-N(1)-(5-phospho-D-ribosyl)glycinamide: step 2/2. The chain is Phosphoribosylformylglycinamidine cyclo-ligase from Salmonella typhi.